Here is a 256-residue protein sequence, read N- to C-terminus: 1-(5-phosphoribosyl)-5-[(5-phosphoribosylamino)methylideneamino] imidazole-4-carboxamide isomerase (256 aa).

Asp-8 serves as the catalytic Proton acceptor. Asp-129 functions as the Proton donor in the catalytic mechanism.

The protein belongs to the HisA/HisF family.

The protein localises to the cytoplasm. The enzyme catalyses 1-(5-phospho-beta-D-ribosyl)-5-[(5-phospho-beta-D-ribosylamino)methylideneamino]imidazole-4-carboxamide = 5-[(5-phospho-1-deoxy-D-ribulos-1-ylimino)methylamino]-1-(5-phospho-beta-D-ribosyl)imidazole-4-carboxamide. Its pathway is amino-acid biosynthesis; L-histidine biosynthesis; L-histidine from 5-phospho-alpha-D-ribose 1-diphosphate: step 4/9. This is 1-(5-phosphoribosyl)-5-[(5-phosphoribosylamino)methylideneamino] imidazole-4-carboxamide isomerase from Picosynechococcus sp. (strain ATCC 27264 / PCC 7002 / PR-6) (Agmenellum quadruplicatum).